A 138-amino-acid polypeptide reads, in one-letter code: Basic phospholipase A2 homolog Tpu-K49a (138 aa).

Residues 1-16 (MRTLWIMAVLLVGVEG) form the signal peptide. Disulfide bonds link Cys-42-Cys-131, Cys-44-Cys-60, Cys-59-Cys-111, Cys-65-Cys-138, Cys-66-Cys-104, and Cys-91-Cys-102. Positions 121 to 133 (KKERINTKIFCKK) are important for membrane-damaging activities in eukaryotes and bacteria; heparin-binding.

As to quaternary structure, monomer. In terms of tissue distribution, expressed by the venom gland.

The protein localises to the secreted. In terms of biological role, snake venom phospholipase A2 homolog that lacks catalytic activity. Induces local edema a few hours after injection in the hind foot. Is myotoxic. A model of myotoxic mechanism has been proposed: an apo Lys49-PLA2 is activated by the entrance of a hydrophobic molecule (e.g. fatty acid) at the hydrophobic channel of the protein leading to a reorientation of a monomer. This reorientation causes a transition between 'inactive' to 'active' states, causing alignment of C-terminal and membrane-docking sites (MDoS) side-by-side and putting the membrane-disruption sites (MDiS) in the same plane, exposed to solvent and in a symmetric position for both monomers. The MDoS region stabilizes the toxin on membrane by the interaction of charged residues with phospholipid head groups. Subsequently, the MDiS region destabilizes the membrane with penetration of hydrophobic residues. This insertion causes a disorganization of the membrane, allowing an uncontrolled influx of ions (i.e. calcium and sodium), and eventually triggering irreversible intracellular alterations and cell death. The protein is Basic phospholipase A2 homolog Tpu-K49a of Craspedocephalus puniceus (Flat-nosed pitviper).